Here is a 105-residue protein sequence, read N- to C-terminus: Vacuolar ATPase assembly integral membrane protein VMA21 homolog (105 aa).

A disordered region spans residues 1-26; the sequence is MSTKNKKAAGGNGVAPKQTRQQSHDS. The Cytoplasmic segment spans residues 1–36; it reads MSTKNKKAAGGNGVAPKQTRQQSHDSQDYSSFKTVL. Residues 37-57 traverse the membrane as a helical segment; sequence FYCMLIVFLPVLTFFVLKGFV. The Lumenal portion of the chain corresponds to 58-68; that stretch reads LDQFLDISEVK. A helical transmembrane segment spans residues 69–89; that stretch reads VNIASAVGAVVALHIALGLYI. Residues 90 to 105 are Cytoplasmic-facing; that stretch reads YRAYFGAPGSKGSKTD.

The protein belongs to the VMA21 family.

The protein resides in the endoplasmic reticulum membrane. The protein localises to the endoplasmic reticulum-Golgi intermediate compartment membrane. It is found in the cytoplasmic vesicle. Its subcellular location is the COPII-coated vesicle membrane. Required for the assembly of the V0 complex of the vacuolar ATPase (V-ATPase) in the endoplasmic reticulum. The protein is Vacuolar ATPase assembly integral membrane protein VMA21 homolog of Drosophila melanogaster (Fruit fly).